Reading from the N-terminus, the 496-residue chain is Proline--tRNA ligase (496 aa).

It belongs to the class-II aminoacyl-tRNA synthetase family. ProS type 3 subfamily. As to quaternary structure, homodimer.

It localises to the cytoplasm. It catalyses the reaction tRNA(Pro) + L-proline + ATP = L-prolyl-tRNA(Pro) + AMP + diphosphate. Functionally, catalyzes the attachment of proline to tRNA(Pro) in a two-step reaction: proline is first activated by ATP to form Pro-AMP and then transferred to the acceptor end of tRNA(Pro). This chain is Proline--tRNA ligase, found in Phocaeicola vulgatus (strain ATCC 8482 / DSM 1447 / JCM 5826 / CCUG 4940 / NBRC 14291 / NCTC 11154) (Bacteroides vulgatus).